A 245-amino-acid polypeptide reads, in one-letter code: 6-carboxyhexanoate--CoA ligase (245 aa).

Belongs to the BioW family. As to quaternary structure, homodimer. It depends on Mg(2+) as a cofactor.

It catalyses the reaction heptanedioate + ATP + CoA = 6-carboxyhexanoyl-CoA + AMP + diphosphate. It participates in metabolic intermediate metabolism; pimeloyl-CoA biosynthesis; pimeloyl-CoA from pimelate: step 1/1. In terms of biological role, catalyzes the transformation of pimelate into pimeloyl-CoA with concomitant hydrolysis of ATP to AMP. The sequence is that of 6-carboxyhexanoate--CoA ligase from Methanococcus vannielii (strain ATCC 35089 / DSM 1224 / JCM 13029 / OCM 148 / SB).